Reading from the N-terminus, the 128-residue chain is Large ribosomal subunit protein bL12 (128 aa).

This sequence belongs to the bacterial ribosomal protein bL12 family. In terms of assembly, homodimer. Part of the ribosomal stalk of the 50S ribosomal subunit. Forms a multimeric L10(L12)X complex, where L10 forms an elongated spine to which 2 to 4 L12 dimers bind in a sequential fashion. Binds GTP-bound translation factors.

Forms part of the ribosomal stalk which helps the ribosome interact with GTP-bound translation factors. Is thus essential for accurate translation. This chain is Large ribosomal subunit protein bL12, found in Kocuria rhizophila (strain ATCC 9341 / DSM 348 / NBRC 103217 / DC2201).